We begin with the raw amino-acid sequence, 228 residues long: UPF0173 metal-dependent hydrolase PTH_1415 (228 aa).

This sequence belongs to the UPF0173 family.

This Pelotomaculum thermopropionicum (strain DSM 13744 / JCM 10971 / SI) protein is UPF0173 metal-dependent hydrolase PTH_1415.